The sequence spans 295 residues: Indole-3-glycerol phosphate synthase (295 aa).

It belongs to the TrpC family.

The catalysed reaction is 1-(2-carboxyphenylamino)-1-deoxy-D-ribulose 5-phosphate + H(+) = (1S,2R)-1-C-(indol-3-yl)glycerol 3-phosphate + CO2 + H2O. It participates in amino-acid biosynthesis; L-tryptophan biosynthesis; L-tryptophan from chorismate: step 4/5. The protein is Indole-3-glycerol phosphate synthase of Prochlorococcus marinus (strain NATL1A).